Reading from the N-terminus, the 250-residue chain is Galectin-3 (250 aa).

Residues 1–60 (MADNFSLHDALSGSGNPNPQGWPGAWGNQPAGAGGYPGASYPGAYPGQAPPGAYPGQAPP) are disordered. N-acetylalanine is present on Ala2. Phosphoserine is present on residues Ser6 and Ser12. Repeat copies occupy residues 36 to 44 (YPGASYPGA), 45 to 53 (YPGQAPPGA), and 54 to 62 (YPGQAPPGA). Positions 36-109 (YPGASYPGAY…AYPATGPYGA (74 aa)) are 8 X 9 AA tandem repeats of Y-P-G-X(3)-P-G-A. A compositionally biased stretch (low complexity) spans 38 to 47 (GASYPGAYPG). Residues 48 to 60 (QAPPGAYPGQAPP) show a composition bias toward pro residues. A 4; approximate repeat occupies 63–69 (YPGAPGA). The stretch at 70–78 (YPGAPAPGV) is repeat 5. A 6; approximate repeat occupies 79–88 (YPGPPSGPGA). One copy of the 7; approximate repeat lies at 89-100 (YPSSGQPSATGA). Residues 101–109 (YPATGPYGA) form an 8; approximate repeat. A Galectin domain is found at 118–248 (YNLPLPGGVV…DIDLTSASYT (131 aa)). An a beta-D-galactoside-binding site is contributed by 181–187 (WGREERQ). Ser188 carries the post-translational modification Phosphoserine. The Nuclear export signal motif lies at 226–241 (KKLNEISKLGISGDID).

Probably forms homo- or heterodimers. Interacts with DMBT1. Interacts with CD6 and ALCAM. Forms a complex with the ITGA3, ITGB1 and CSPG4. Interacts with LGALS3BP, LYPD3, ZFTRAF1 and UACA. Interacts with TRIM16; this interaction mediates autophagy of damage endomembranes. Interacts with cargo receptor TMED10; the interaction mediates the translocation from the cytoplasm into the ERGIC (endoplasmic reticulum-Golgi intermediate compartment) and thereby secretion. In terms of tissue distribution, a major expression is found in the colonic epithelium. It is also abundant in the activated macrophages. Expressed in fetal membranes.

Its subcellular location is the cytoplasm. The protein resides in the nucleus. It localises to the secreted. Functionally, galactose-specific lectin which binds IgE. May mediate with the alpha-3, beta-1 integrin the stimulation by CSPG4 of endothelial cells migration. Together with DMBT1, required for terminal differentiation of columnar epithelial cells during early embryogenesis. In the nucleus: acts as a pre-mRNA splicing factor. Involved in acute inflammatory responses including neutrophil activation and adhesion, chemoattraction of monocytes macrophages, opsonization of apoptotic neutrophils, and activation of mast cells. Together with TRIM16, coordinates the recognition of membrane damage with mobilization of the core autophagy regulators ATG16L1 and BECN1 in response to damaged endomembranes. The protein is Galectin-3 of Homo sapiens (Human).